Consider the following 2210-residue polypeptide: RNA-directed RNA polymerase L (2210 aa).

Positions 26–285 (KAIFLSQTKL…KCAIMSEEDS (260 aa)) are endonuclease. Mn(2+)-binding residues include glutamate 51, aspartate 88, and glutamate 101. The active site involves lysine 114. Positions 1163 to 1359 (LDMKSVVRQG…FLSDKLNKFV (197 aa)) constitute a RdRp catalytic domain. Aspartate 1319 serves as a coordination point for Mg(2+).

It belongs to the Bunyavirales RNA polymerase family. Homomultimer; the oligomeric structure is essential for the polymerase activity. Interacts with nucleoprotein N. Interacts with protein Z; this interaction inhibits viral transcription and replication, Z partially blocks the product exit tunnel for the releasing nascent RNA product. Mn(2+) serves as cofactor. Requires Mg(2+) as cofactor.

The protein resides in the virion. It is found in the host cytoplasm. The catalysed reaction is RNA(n) + a ribonucleoside 5'-triphosphate = RNA(n+1) + diphosphate. RNA-dependent RNA polymerase, which is responsible for the replication and transcription of the viral RNA genome using antigenomic RNA as an intermediate. During transcription, synthesizes subgenomic RNAs and assures their capping by a cap-snatching mechanism, which involves the endonuclease activity cleaving the host capped pre-mRNAs. These short capped RNAs are then used as primers for viral transcription. The 3'-end of subgenomic mRNAs molecules are heterogeneous and not polyadenylated. The replicase function is to direct synthesis of antigenomic and genomic RNA which are encapsidated and non capped. As a consequence of the use of the same enzyme for both transcription and replication, these mechanisms need to be well coordinated. These processes may be regulated by proteins N and Z in a dose-dependent manner. Z protein inhibits the viral polymerase L und thus the viral transcription and RNA synthesis. The chain is RNA-directed RNA polymerase L from Sigmodon alstoni (PIRV).